The primary structure comprises 117 residues: Large ribosomal subunit protein uL18 (117 aa).

This sequence belongs to the universal ribosomal protein uL18 family. As to quaternary structure, part of the 50S ribosomal subunit; part of the 5S rRNA/L5/L18/L25 subcomplex. Contacts the 5S and 23S rRNAs.

This is one of the proteins that bind and probably mediate the attachment of the 5S RNA into the large ribosomal subunit, where it forms part of the central protuberance. This chain is Large ribosomal subunit protein uL18, found in Blochmanniella floridana.